The sequence spans 197 residues: Transcription factor FapR (197 aa).

It belongs to the FapR family.

In terms of biological role, transcriptional factor involved in regulation of membrane lipid biosynthesis by repressing genes involved in fatty acid and phospholipid metabolism. In Bacillus cytotoxicus (strain DSM 22905 / CIP 110041 / 391-98 / NVH 391-98), this protein is Transcription factor FapR.